The sequence spans 509 residues: Maturase K (509 aa).

It belongs to the intron maturase 2 family. MatK subfamily.

The protein resides in the plastid. The protein localises to the chloroplast. Functionally, usually encoded in the trnK tRNA gene intron. Probably assists in splicing its own and other chloroplast group II introns. This Hottonia palustris (Water-violet) protein is Maturase K.